A 930-amino-acid chain; its full sequence is GPI ethanolamine phosphate transferase 1 (930 aa).

At 1–8 the chain is on the cytoplasmic side; the sequence is MARLGRTG. Residues 9 to 29 form a helical membrane-spanning segment; it reads FLTLAVVFHLIYAYSIFDIYF. The Lumenal segment spans residues 30–466; it reads VSPIVSGMRP…LQTYDWLFLR (437 aa). N-linked (GlcNAc...) asparagine glycosylation occurs at asparagine 148. The helical transmembrane segment at 467-487 threads the bilayer; sequence TIVTFGYVGWIAYALTTVIHL. The Cytoplasmic portion of the chain corresponds to 488–498; it reads HVLHGASESDR. The chain crosses the membrane as a helical span at residues 499–519; it reads TTASISFFSSVLVALFSVFLY. The Lumenal portion of the chain corresponds to 520–521; sequence QG. The chain crosses the membrane as a helical span at residues 522–542; the sequence is SPWRYYLYGFFPIFFWEEVFA. At 543-569 the chain is on the cytoplasmic side; sequence RRKAFHAGRAGALLLPKRDLHSNKVED. The helical transmembrane segment at 570-590 threads the bilayer; the sequence is IDTITYGGAFMLLTGLLYLLF. Residues 591–611 lie on the Lumenal side of the membrane; that stretch reads EDEILGTSHQPAAVSRKGSRN. Residues 612–632 form a helical membrane-spanning segment; it reads IMGLQLGMVLLALIVTRSSAA. The Cytoplasmic portion of the chain corresponds to 633 to 639; that stretch reads SLQAKQG. Residues 640-660 form a helical membrane-spanning segment; sequence LPFGNQVVGWGVLIASLLLPF. Topologically, residues 661 to 684 are lumenal; it reads AHRLYPNSHYLHRLMIIFLTFSPT. Residues 685 to 705 form a helical membrane-spanning segment; that stretch reads FIILTISYEGLFYFAFCMTLV. Topologically, residues 706–761 are cytoplasmic; that stretch reads TWVRLEHATYVYTAKPVAKQAQETIEPPKKANPGATTVVDGETYRFRTLTVSDARV. Residues 762–782 form a helical membrane-spanning segment; sequence ALFFFFLLQSAFFSTGNIASI. Over 783–803 the chain is Lumenal; it reads SSFSLDSVYRLIPVFNPFSQG. The helical transmembrane segment at 804 to 824 threads the bilayer; the sequence is ALLILKLLIPFAIISANLGIL. Topologically, residues 825-833 are cytoplasmic; the sequence is NRRLEVAPS. Residues 834 to 854 form a helical membrane-spanning segment; the sequence is ALFMVVMAISDVMTLNFFYMV. At 855 to 870 the chain is on the lumenal side; that stretch reads RDEGSWLDIGTTISHF. A helical transmembrane segment spans residues 871–891; the sequence is CIASFLCTFVAGLEFLSEVFI. Topologically, residues 892 to 930 are cytoplasmic; that stretch reads SGVDFGLRTDAITASVPDIVNGITSKGQKDVPNGVEDKE.

Belongs to the PIGG/PIGN/PIGO family. PIGN subfamily.

It is found in the endoplasmic reticulum membrane. It participates in glycolipid biosynthesis; glycosylphosphatidylinositol-anchor biosynthesis. In terms of biological role, ethanolamine phosphate transferase involved in glycosylphosphatidylinositol-anchor biosynthesis. Transfers ethanolamine phosphate to the first alpha-1,4-linked mannose of the glycosylphosphatidylinositol precursor of GPI-anchor. The polypeptide is GPI ethanolamine phosphate transferase 1 (mcd4) (Emericella nidulans (strain FGSC A4 / ATCC 38163 / CBS 112.46 / NRRL 194 / M139) (Aspergillus nidulans)).